We begin with the raw amino-acid sequence, 838 residues long: MAERSGKITAGQAYIEVEYDYEYDAKDRKIVIRQGERYLLVKKTNDDWWQVRPDENSKAFYVPAQYVKEVTRKALMPPVKQATGLPNNSMKTIQSMHLQRSTENVNKMPELSSFGKPSSSVQGTGLIRDANQNFGSNYNSGQTLNLSLDLTHNNGKFNSDSHSPKVSSQNRTRLFGHFPGPEFLDIEKTSFSQEQSCDSAGEGSERIQQDSESGDELSSSSTEQMRATTPPNQGRPDSPVYANLQELKISQSALPPLPGSPAIQVNGEWETHKDSSGRCYYYNRTTQERTWKPPRWARDVSTSRDFQSPGEQEPLSSEENYHSSCFSQSDSQCGSPPRGWSEELDERGHTLYTSDYTKEKWLKHVDDQGRQYYYSADGSRSEWELPKYNASSQQQREIIKSRSLDRRLQEPIVLTKWRHSTIVLDSNDKDSPTTTKLCLPENESPPTSSKHQDPGQEKYGLLNVTKITENGKKVRKNWLSSWAVLQGSSLLFTKTQGSSTSWFGSNQSKPEFTVDLKGAVIEMASKDKSSKKNVFELKTRQGTELLIQSDNDAVINDWFKVLSSTINNQVAEADEAAEEETPDSPGVEKHDKEKDQKELKKLRSMKGSSMDSSEQKKTKKNLKKFLTRRPTLQAVREKGYIKDQVFGSNLANLCQRENGTVPKFVKLCIEHVEEHGLDVDGIYRVSGNLAVIQKLRFAVNHDEKLDLNDSKWEDIHVITGALKMFFRELPEPLFTFNHFNDFVNAIKQEPRQRVTAVKDLIRQLPKPNQDTMQILFRHLKRVIENGEKNRMTYQSIAIVFGPTLLKPERETGNIAVHTVYQNQIVELILLELSTVFGR.

The 63-residue stretch at 10–72 (AGQAYIEVEY…PAQYVKEVTR (63 aa)) folds into the SH3 domain. 2 stretches are compositionally biased toward polar residues: residues 155–172 (GKFN…QNRT) and 189–198 (TSFSQEQSCD). Positions 155 to 239 (GKFNSDSHSP…PPNQGRPDSP (85 aa)) are disordered. At Ser163 the chain carries Phosphoserine. Residues Ser199, Ser211, and Ser213 each carry the phosphoserine modification. Phosphothreonine is present on residues Thr228 and Thr229. Ser238 carries the phosphoserine modification. Tyr241 is modified (phosphotyrosine). The region spanning 263-296 (IQVNGEWETHKDSSGRCYYYNRTTQERTWKPPRW) is the WW 1 domain. Residues 291–302 (WKPPRWARDVST) are compositionally biased toward basic and acidic residues. A disordered region spans residues 291-346 (WKPPRWARDVSTSRDFQSPGEQEPLSSEENYHSSCFSQSDSQCGSPPRGWSEELDE). Positions 303 to 334 (SRDFQSPGEQEPLSSEENYHSSCFSQSDSQCG) are enriched in polar residues. Residues 355 to 388 (DYTKEKWLKHVDDQGRQYYYSADGSRSEWELPKY) form the WW 2 domain. Residues 425 to 456 (DSNDKDSPTTTKLCLPENESPPTSSKHQDPGQ) form a disordered region. Residues 466 to 567 (KITENGKKVR…WFKVLSSTIN (102 aa)) form the PH domain. A compositionally biased stretch (acidic residues) spans 572–582 (EADEAAEEETP). The segment at 572 to 620 (EADEAAEEETPDSPGVEKHDKEKDQKELKKLRSMKGSSMDSSEQKKTKK) is disordered. A Phosphoserine modification is found at Ser584. Over residues 586–601 (GVEKHDKEKDQKELKK) the composition is skewed to basic and acidic residues. The Rho-GAP domain maps to 648–836 (SNLANLCQRE…LILLELSTVF (189 aa)).

Its function is as follows. GTPase activator for the Rho-type GTPases by converting them to an inactive GDP-bound state. The chain is Rho GTPase-activating protein 12 (Arhgap12) from Mus musculus (Mouse).